Here is a 479-residue protein sequence, read N- to C-terminus: UDP-N-acetylmuramate--L-alanine ligase (479 aa).

Gly-126 to Thr-132 provides a ligand contact to ATP.

It belongs to the MurCDEF family.

It is found in the cytoplasm. The catalysed reaction is UDP-N-acetyl-alpha-D-muramate + L-alanine + ATP = UDP-N-acetyl-alpha-D-muramoyl-L-alanine + ADP + phosphate + H(+). The protein operates within cell wall biogenesis; peptidoglycan biosynthesis. Its function is as follows. Cell wall formation. In Alkalilimnicola ehrlichii (strain ATCC BAA-1101 / DSM 17681 / MLHE-1), this protein is UDP-N-acetylmuramate--L-alanine ligase.